A 156-amino-acid polypeptide reads, in one-letter code: Rhombotin-1 (156 aa).

LIM zinc-binding domains follow at residues 24–83 and 88–147; these read CAGC…RLFG and CAAC…EGQL.

Expressed mainly in the central nervous. Low level of expression in other tissues including thymus.

Its subcellular location is the nucleus. Functionally, may be involved in gene regulation within neural lineage cells potentially by direct DNA binding or by binding to other transcription factors. In Homo sapiens (Human), this protein is Rhombotin-1 (LMO1).